A 622-amino-acid chain; its full sequence is 1-deoxy-D-xylulose-5-phosphate synthase (622 aa).

Thiamine diphosphate is bound by residues His74 and 115 to 117 (GHS). Asp146 contributes to the Mg(2+) binding site. Residues 147-148 (GA), Asn175, Tyr286, and Glu366 contribute to the thiamine diphosphate site. Asn175 contacts Mg(2+).

The protein belongs to the transketolase family. DXPS subfamily. As to quaternary structure, homodimer. Mg(2+) is required as a cofactor. Requires thiamine diphosphate as cofactor.

It carries out the reaction D-glyceraldehyde 3-phosphate + pyruvate + H(+) = 1-deoxy-D-xylulose 5-phosphate + CO2. The protein operates within metabolic intermediate biosynthesis; 1-deoxy-D-xylulose 5-phosphate biosynthesis; 1-deoxy-D-xylulose 5-phosphate from D-glyceraldehyde 3-phosphate and pyruvate: step 1/1. In terms of biological role, catalyzes the acyloin condensation reaction between C atoms 2 and 3 of pyruvate and glyceraldehyde 3-phosphate to yield 1-deoxy-D-xylulose-5-phosphate (DXP). The chain is 1-deoxy-D-xylulose-5-phosphate synthase from Carboxydothermus hydrogenoformans (strain ATCC BAA-161 / DSM 6008 / Z-2901).